We begin with the raw amino-acid sequence, 367 residues long: Protein-glutamate methylesterase/protein-glutamine glutaminase 2 (367 aa).

Residues 3-120 (SVVVVDDSAF…SLDIVRIEND (118 aa)) enclose the Response regulatory domain. At Asp54 the chain carries 4-aspartylphosphate. Positions 132–174 (RMLRTPRPVRPAPTASAPAQTAQVASAAPATAPSRPAMPATRA) are disordered. Residues 143-174 (APTASAPAQTAQVASAAPATAPSRPAMPATRA) show a composition bias toward low complexity. The 193-residue stretch at 175 to 367 (SRPVRDVVAI…AAAIMNGLYK (193 aa)) folds into the CheB-type methylesterase domain. Residues Ser187, His214, and Asp310 contribute to the active site.

This sequence belongs to the CheB family. Phosphorylated by CheA. Phosphorylation of the N-terminal regulatory domain activates the methylesterase activity.

It localises to the cytoplasm. It carries out the reaction [protein]-L-glutamate 5-O-methyl ester + H2O = L-glutamyl-[protein] + methanol + H(+). It catalyses the reaction L-glutaminyl-[protein] + H2O = L-glutamyl-[protein] + NH4(+). Involved in chemotaxis. Part of a chemotaxis signal transduction system that modulates chemotaxis in response to various stimuli. Catalyzes the demethylation of specific methylglutamate residues introduced into the chemoreceptors (methyl-accepting chemotaxis proteins or MCP) by CheR. Also mediates the irreversible deamidation of specific glutamine residues to glutamic acid. The polypeptide is Protein-glutamate methylesterase/protein-glutamine glutaminase 2 (Nitratidesulfovibrio vulgaris (strain ATCC 29579 / DSM 644 / CCUG 34227 / NCIMB 8303 / VKM B-1760 / Hildenborough) (Desulfovibrio vulgaris)).